A 475-amino-acid polypeptide reads, in one-letter code: DnaB-like replicative helicase (475 aa).

The SF4 helicase domain occupies 165 to 444; the sequence is YMNKARKVPF…STPTEVNEVA (280 aa). An ATP-binding site is contributed by 197-204; sequence AGVNVGKS. The segment at 456–475 is interaction with the helicase assembly factor; the sequence is YQRNESTRAQLDALANELKF.

This sequence belongs to the helicase family. DnaB subfamily. Homohexamer. The homohexamer is a trimer of asymmetric dimers. Interacts with the DNA primase; this interaction forms the active primosome complex, which is composed of 6 helicase and 1 primase subunits and expresses full helicase and primase activities. Interacts (via C-terminus) with the helicase assembly factor; this interaction brings about the rapid assembly of the helicase onto ssDNA. Part of the replicase complex that includes the DNA polymerase, the polymerase clamp, the clamp loader complex, the single-stranded DNA binding protein, the primase, the DnaB-like replicative helicase and the helicase assembly factor.

Functionally, ATP-dependent DNA helicase essential for viral DNA replication and recombination. The helicase moves 5' -&gt; 3' on the lagging strand template, unwinding the DNA duplex ahead of the leading strand polymerase at the replication fork and generating ssDNA for both leading and lagging strand synthesis. Interaction with the primase allows the primase to initiate lagging strand synthesis and fully activates the helicase. Loaded by the helicase assembly factor on replication forks that begin at discrete replication origin sequences, as well as on forks that are created during recombination. The protein is DnaB-like replicative helicase of Escherichia coli (Bacteriophage T4).